Reading from the N-terminus, the 200-residue chain is Large ribosomal subunit protein bL25 (200 aa).

The segment at 1–20 (MEARELKANVRKESGKEQAR) is disordered.

This sequence belongs to the bacterial ribosomal protein bL25 family. CTC subfamily. In terms of assembly, part of the 50S ribosomal subunit; part of the 5S rRNA/L5/L18/L25 subcomplex. Contacts the 5S rRNA. Binds to the 5S rRNA independently of L5 and L18.

Its function is as follows. This is one of the proteins that binds to the 5S RNA in the ribosome where it forms part of the central protuberance. The sequence is that of Large ribosomal subunit protein bL25 from Syntrophus aciditrophicus (strain SB).